The sequence spans 123 residues: Small ribosomal subunit protein uS12cz/uS12cy (123 aa).

Belongs to the universal ribosomal protein uS12 family. As to quaternary structure, part of the 30S ribosomal subunit.

It localises to the plastid. The protein localises to the chloroplast. Functionally, with S4 and S5 plays an important role in translational accuracy. Located at the interface of the 30S and 50S subunits. This chain is Small ribosomal subunit protein uS12cz/uS12cy (rps12-A), found in Gossypium hirsutum (Upland cotton).